A 611-amino-acid chain; its full sequence is Serine/arginine repetitive matrix protein 4 (611 aa).

Disordered regions lie at residues 38–248 and 263–611; these read ARKP…PLQM and SAAD…STRR. 2 stretches are compositionally biased toward basic residues: residues 107–123 and 131–189; these read RGKK…RRRS and VKKK…HRCP. A compositionally biased stretch (low complexity) spans 190-202; it reads SRSQSSESRPSSC. The span at 203 to 216 shows a compositional bias: basic and acidic residues; it reads ESRHRGRSPEEGQK. Basic residues predominate over residues 217 to 226; it reads SRRRHSRRCS. Residues 270–290 show a composition bias toward polar residues; it reads KTASPLTTSRGRSQEYDSGND. A compositionally biased stretch (low complexity) spans 291–301; the sequence is TSSPPSTQTSS. Residues 322-341 are compositionally biased toward polar residues; it reads LNSGNTSDSGNSFTTSSPQN. 2 stretches are compositionally biased toward low complexity: residues 390 to 422 and 430 to 461; these read SRSS…SRST and SRSP…SRYS. Residues 462–482 are compositionally biased toward basic and acidic residues; sequence PSRERDPKYSEKDSQQRERER. A compositionally biased stretch (basic residues) spans 483–498; sequence ARRRRRSYSPMRKRRR. A compositionally biased stretch (basic and acidic residues) spans 499-508; that stretch reads DSPSHLEARR. Over residues 522–549 the composition is skewed to low complexity; sequence PSPSSSGSLSSTSSWYSSSSSRSASRSY. The span at 550–564 shows a compositional bias: basic residues; that stretch reads SRSRSRSRSRRRSRT. Positions 565-580 are enriched in low complexity; it reads RTSSSSSSRSPSPGSR. Over residues 581–595 the composition is skewed to basic residues; that stretch reads SRSRSRSRSRSRSRS. Residues 596 to 611 show a composition bias toward low complexity; that stretch reads QSRSYSSADSYSSTRR.

The protein belongs to the nSR100 family. In terms of processing, phosphorylated. Specifically expressed in neuronal cells (at protein level). Expressed in the cerebellum.

It localises to the nucleus. In terms of biological role, splicing factor specifically required for neural cell differentiation. Acts in conjunction with nPTB/PTBP2 by binding directly to its regulated target transcripts and promotes neural-specific exon inclusion in many genes that function in neural cell differentiation. Required to promote the inclusion of neural-specific exon 10 in nPTB/PTBP2, leading to increased expression of neural-specific nPTB/PTBP2. Also promotes the inclusion of exon 16 in DAAM1 in neuron extracts. Promotes alternative splicing of REST transcripts to produce REST isoform 3 (REST4) with greatly reduced repressive activity, thereby activating expression of REST targets in neural cells. Plays an important role during embryonic development as well as in the proper functioning of the adult nervous system. Regulates alternative splicing events in genes with important neuronal functions. In Homo sapiens (Human), this protein is Serine/arginine repetitive matrix protein 4 (SRRM4).